Consider the following 262-residue polypeptide: MFSEYKSTKKAGPKPAQKVEQVYEYAVWWLNQRGYSVSKLKEKLTRKTDNPEWIASVIEKLLDQGYLSDQRFAETFVQSRCRLYGPKVLTQKLKLQGVGTTDIEHALCTINDSDTDELISRVIAKYSGKKSIRDITMRLKSEGIDDTRIQSVLSSNIDTEHESQLATRIINKHAKKMGRSGLLQKLRSEGISQDTIDELFSEESKDDVIEDDQHKALEQLNKKYKTSLTDFAEKKKATAFLVRKGFSFSEANYAIEHHLEDL.

It belongs to the RecX family.

It is found in the cytoplasm. Its function is as follows. Modulates RecA activity. In Photobacterium profundum (strain SS9), this protein is Regulatory protein RecX.